The sequence spans 282 residues: MAAAAINAAAPPPPVAPTAPPPPPPPPLSQASGRLPSRVLELVFSYLDLPDLRSCGLVCKHWYRCLHGDENSEVWRSLCGRIVSEEALRTDILCNLPTYKAKMRAFQHGFSSSDCSRNVYIKKNGFTLHRNPIAQSTDGARTKIGFSEGRHAWEVWWEGPLGTVAVIGIATKRAPMQCQGYVALLGSDDQSWGWNLVDNNLLHNGEVNGSFPQCNNAPKYQIGERIRVILDMEDKTLAFERGYEFLGVAFRGLPKTCLYPAVSAVYGNTEVTLVYLGKPLDG.

The interval Met1–Ser32 is disordered. The span at Ala10–Leu28 shows a compositional bias: pro residues. One can recognise an F-box domain in the interval Ser29–Leu78. The 193-residue stretch at Leu88–Leu280 folds into the B30.2/SPRY domain.

Belongs to the FBXO45/Fsn family. In terms of assembly, probable component of a E3 ubiquitin ligase complex.

It functions in the pathway protein modification; protein ubiquitination. The sequence is that of F-box/SPRY domain-containing protein 1 (fbxo45) from Xenopus tropicalis (Western clawed frog).